The primary structure comprises 375 residues: Coproporphyrin III ferrochelatase (375 aa).

Positions 59 and 128 each coordinate Fe-coproporphyrin III. The Fe(2+) site is built by H191 and E286.

Belongs to the ferrochelatase family.

The protein resides in the cytoplasm. It catalyses the reaction Fe-coproporphyrin III + 2 H(+) = coproporphyrin III + Fe(2+). It participates in porphyrin-containing compound metabolism; protoheme biosynthesis. In terms of biological role, involved in coproporphyrin-dependent heme b biosynthesis. Catalyzes the insertion of ferrous iron into coproporphyrin III to form Fe-coproporphyrin III. This chain is Coproporphyrin III ferrochelatase, found in Streptomyces griseus subsp. griseus (strain JCM 4626 / CBS 651.72 / NBRC 13350 / KCC S-0626 / ISP 5235).